We begin with the raw amino-acid sequence, 419 residues long: Gamma-glutamyl phosphate reductase (419 aa).

The protein belongs to the gamma-glutamyl phosphate reductase family.

The protein localises to the cytoplasm. It carries out the reaction L-glutamate 5-semialdehyde + phosphate + NADP(+) = L-glutamyl 5-phosphate + NADPH + H(+). It functions in the pathway amino-acid biosynthesis; L-proline biosynthesis; L-glutamate 5-semialdehyde from L-glutamate: step 2/2. Its function is as follows. Catalyzes the NADPH-dependent reduction of L-glutamate 5-phosphate into L-glutamate 5-semialdehyde and phosphate. The product spontaneously undergoes cyclization to form 1-pyrroline-5-carboxylate. In Yersinia pseudotuberculosis serotype O:1b (strain IP 31758), this protein is Gamma-glutamyl phosphate reductase.